The following is a 217-amino-acid chain: MPETEKPLFGHPWIFIRGVPSLTFLPPEGPSEVAFAGRSNVGKSSLINALVGQKGLARTSNTPGRTQELNYFVPDGYSGEGGDLPPMAIVDMPGYGYAQAPKEQVDKWTKLVFDYLRGRATLKRVYVLIDSRHGIKKNDEDVLTLLDKAAVSYQLVLTKTDKIKAPAVPKLLAETADKIRKRPAAYPAVLSTSSEKGDGLDDLRQAIAQTVGIANWE.

One can recognise an EngB-type G domain in the interval 29–213; that stretch reads GPSEVAFAGR…RQAIAQTVGI (185 aa). GTP-binding positions include 37–44, 64–68, 91–94, 158–161, and 192–194; these read GRSNVGKS, GRTQE, DMPG, TKTD, and TSS. Mg(2+)-binding residues include serine 44 and threonine 66.

It belongs to the TRAFAC class TrmE-Era-EngA-EngB-Septin-like GTPase superfamily. EngB GTPase family. Mg(2+) is required as a cofactor.

In terms of biological role, necessary for normal cell division and for the maintenance of normal septation. The chain is Probable GTP-binding protein EngB from Rhizobium etli (strain CIAT 652).